Reading from the N-terminus, the 344-residue chain is uncharacterized protein (344 aa).

This sequence belongs to the glycosyltransferase 2 family.

In terms of biological role, may be involved in the production of the exopolysaccharide (EPS) component of the extracellular matrix during biofilm formation. EPS is responsible for the adhesion of chains of cells into bundles. This is an uncharacterized protein from Bacillus subtilis (strain 168).